Consider the following 323-residue polypeptide: tRNA U34 carboxymethyltransferase (323 aa).

Carboxy-S-adenosyl-L-methionine contacts are provided by residues Lys91, Trp105, Lys110, Gly130, 152–154, 181–182, Met196, Tyr200, and Arg315; these read DPT and IE.

This sequence belongs to the class I-like SAM-binding methyltransferase superfamily. CmoB family. As to quaternary structure, homotetramer.

It catalyses the reaction carboxy-S-adenosyl-L-methionine + 5-hydroxyuridine(34) in tRNA = 5-carboxymethoxyuridine(34) in tRNA + S-adenosyl-L-homocysteine + H(+). Catalyzes carboxymethyl transfer from carboxy-S-adenosyl-L-methionine (Cx-SAM) to 5-hydroxyuridine (ho5U) to form 5-carboxymethoxyuridine (cmo5U) at position 34 in tRNAs. This is tRNA U34 carboxymethyltransferase from Escherichia coli O157:H7.